A 375-amino-acid chain; its full sequence is 2-oxoglutarate synthase subunit KorA (375 aa).

Heterotetramer of the KorA, KorB, KorC and KorD subunits.

The enzyme catalyses 2 oxidized [2Fe-2S]-[ferredoxin] + 2-oxoglutarate + CoA = succinyl-CoA + 2 reduced [2Fe-2S]-[ferredoxin] + CO2 + H(+). This is 2-oxoglutarate synthase subunit KorA (korA) from Methanothermobacter marburgensis (strain ATCC BAA-927 / DSM 2133 / JCM 14651 / NBRC 100331 / OCM 82 / Marburg) (Methanobacterium thermoautotrophicum).